The primary structure comprises 199 residues: Glycerol-3-phosphate acyltransferase (199 aa).

Helical transmembrane passes span Leu2–Val22, Pro77–Leu97, Ile113–Ala133, and Leu139–Leu159.

This sequence belongs to the PlsY family. In terms of assembly, probably interacts with PlsX.

It localises to the cell membrane. It carries out the reaction an acyl phosphate + sn-glycerol 3-phosphate = a 1-acyl-sn-glycero-3-phosphate + phosphate. It participates in lipid metabolism; phospholipid metabolism. In terms of biological role, catalyzes the transfer of an acyl group from acyl-phosphate (acyl-PO(4)) to glycerol-3-phosphate (G3P) to form lysophosphatidic acid (LPA). This enzyme utilizes acyl-phosphate as fatty acyl donor, but not acyl-CoA or acyl-ACP. This Rubrobacter xylanophilus (strain DSM 9941 / JCM 11954 / NBRC 16129 / PRD-1) protein is Glycerol-3-phosphate acyltransferase.